The following is a 364-amino-acid chain: Growth hormone secretagogue receptor type 1 (364 aa).

Residues 1-40 (MWNATPSEEPEPNVTLDLDWDASPGNDSLPDELLPLFPAP) lie on the Extracellular side of the membrane. Residues Asn13 and Asn26 are each glycosylated (N-linked (GlcNAc...) asparagine). Residues 41–66 (LLAGVTATCVALFVVGISGNLLTMLV) traverse the membrane as a helical segment. At 67 to 72 (VSRFRE) the chain is on the cytoplasmic side. The helical transmembrane segment at 73-96 (LRTTTNLYLSSMAFSDLLIFLCMP) threads the bilayer. Residues 97-117 (LDLVRLWQYRPWNFGDLLCKL) lie on the Extracellular side of the membrane. A disulfide bond links Cys115 and Cys197. A helical membrane pass occupies residues 118–139 (FQFVSESCTYATVLTITALSVE). Residues 140-162 (RYFAICFPLRAKVVVTKGRVKLV) are Cytoplasmic-facing. A helical transmembrane segment spans residues 163–183 (ILVIWAVAFCSAGPIFVLVGV). Residues 184 to 211 (EHENGTDPRDTNECRATEFAVRSGLLTV) are Extracellular-facing. N-linked (GlcNAc...) asparagine glycosylation occurs at Asn187. Residues 212-235 (MVWVSSVFFFLPVFCLTVLYSLIG) form a helical membrane-spanning segment. Over 236-263 (RKLWRRRGDAAVGASLRDQNHKQTVKML) the chain is Cytoplasmic. The chain crosses the membrane as a helical span at residues 264-285 (AVVVFAFILCWLPFHVGRYLFS). The Extracellular portion of the chain corresponds to 286–302 (KSFEPGSLEIAQISQYC). The chain crosses the membrane as a helical span at residues 303-326 (NLVSFVLFYLSAAINPILYNIMSK). Residues 327–364 (KYRVAVFKLLGFESFSQRKLSTLKDESSRAWTKSSINT) lie on the Cytoplasmic side of the membrane.

It belongs to the G-protein coupled receptor 1 family.

It localises to the cell membrane. In terms of biological role, receptor for ghrelin, coupled to G-alpha-11 proteins. Stimulates growth hormone secretion. Also binds other growth hormone releasing peptides (GHRP) (e.g. Met-enkephalin and GHRP-6) as well as non-peptide, low molecular weight secretagogues (e.g. L-692,429, MK-0677, adenosine). The protein is Growth hormone secretagogue receptor type 1 (Ghsr) of Rattus norvegicus (Rat).